A 95-amino-acid polypeptide reads, in one-letter code: Mitochondrial import inner membrane translocase subunit Tim13 (95 aa).

M1 bears the N-acetylmethionine mark. The residue at position 7 (S7) is a Phosphoserine. The Twin CX3C motif signature appears at C46–C69. Intrachain disulfides connect C46–C69 and C50–C65. At K53 the chain carries N6-succinyllysine.

It belongs to the small Tim family. In terms of assembly, heterohexamer; composed of 3 copies of TIMM8 (TIMM8A or TIMM8B) and 3 copies of TIMM13, named soluble 70 kDa complex. Associates with the TIM22 complex, whose core is composed of TIMM22. In terms of tissue distribution, present at high level in liver and brain, and at lower level in muscle and heart. In CNS sections, it is predominantly present in the soma and the dendritic portion of the Purkinje cells of the cerebellum, but not in the glial cells. Scattered expression also is also detected in the brain stem, olfactory bulb, substantia nigra, hippocampus and striatum (at protein level).

It localises to the mitochondrion inner membrane. Functionally, mitochondrial intermembrane chaperone that participates in the import and insertion of some multi-pass transmembrane proteins into the mitochondrial inner membrane. Also required for the transfer of beta-barrel precursors from the TOM complex to the sorting and assembly machinery (SAM complex) of the outer membrane. Acts as a chaperone-like protein that protects the hydrophobic precursors from aggregation and guide them through the mitochondrial intermembrane space. The TIMM8-TIMM13 complex mediates the import of proteins such as TIMM23, SLC25A12/ARALAR1 and SLC25A13/ARALAR2, while the predominant TIMM9-TIMM10 70 kDa complex mediates the import of much more proteins. The protein is Mitochondrial import inner membrane translocase subunit Tim13 (Timm13) of Mus musculus (Mouse).